A 91-amino-acid chain; its full sequence is Mercuric transport protein periplasmic component (91 aa).

A signal peptide spans 1 to 19 (MKKLLSALALAAVVAPVWA). The 67-residue stretch at 22–88 (QTVTLSVPGM…ATEDAGYPSS (67 aa)) folds into the HMA domain. Positions 33 and 36 each coordinate Hg(2+).

Belongs to the MerP family. In terms of assembly, monomer.

The protein localises to the periplasm. Involved in mercury resistance. Acts as a mercury scavenger that specifically binds to a mercuric ion in the periplasm and probably passes it to the cytoplasmic mercuric reductase MerA via the mercuric transport protein MerT. The protein is Mercuric transport protein periplasmic component of Pseudomonas fluorescens.